The sequence spans 611 residues: Immediate-early protein 3 (611 aa).

2 disordered regions span residues 119–155 (TASH…QRLD) and 180–383 (EEEY…SGSD). Residues 138 to 151 (HSEKKAKKHKNKQR) show a composition bias toward basic residues. The Nuclear localization signal signature appears at 141–147 (KKAKKHK). Over residues 198 to 213 (HFDERSPSRSSSDHGG) the composition is skewed to basic and acidic residues. Positions 230-240 (SEDEDDEDDER) are enriched in acidic residues. Positions 260–277 (HGGSHSSRSSIKSSGSGS) are enriched in low complexity. Positions 279–285 (RHHHKRK) match the Nuclear localization signal motif. Low complexity predominate over residues 341-376 (PPSSGSNSNKHSSSSGGSTSSSHKKQQQQQAPSKKP).

Its subcellular location is the host nucleus. In terms of biological role, strong transcriptional activator of the E1 promoter, shows an autoregulatory function by repression of the IE1/IE3 promoter. The IE1 protein has some additive effect on the trans-activating properties of the IE3 protein. In Mus musculus (Mouse), this protein is Immediate-early protein 3 (IE1).